The chain runs to 84 residues: Anthracycline acyl carrier protein DpsG (84 aa).

Residues 3-80 (ELSLAELREI…SMLIFVNERL (78 aa)) form the Carrier domain. S40 is modified (O-(pantetheine 4'-phosphoryl)serine).

It participates in antibiotic biosynthesis; daunorubicin biosynthesis. The protein operates within antibiotic biosynthesis; carminomycin biosynthesis. Its pathway is antibiotic biosynthesis; rhodomycin biosynthesis. It functions in the pathway antibiotic biosynthesis; aclacinomycin biosynthesis. In terms of biological role, involved in the biosynthesis of aklanonate which is an important precursor common to the formation of the clinically significant anthracyclines such as carminomycin, daunorubicin (daunomycin), rhodomycin, aclacinomycin T (aklavin) and aclacinomycin A (aclarubicin). These compounds are aromatic polyketide antibiotics that exhibit high cytotoxicity and are widely applied in the chemotherapy of a variety of cancers. The polypeptide is Anthracycline acyl carrier protein DpsG (dpsG) (Streptomyces peucetius).